Here is a 298-residue protein sequence, read N- to C-terminus: AFPQRVKVVEVGPRDGLQNEKSVVPTPVKIRLIDMLSETGLPVIEATSFVSPRWVPQMADHAEVMQGINKLPGVSYPVLTPNLKGFQAAVAAGAKEVSIFGAASELFTKKNINCSIEESLERFSEVMNAARAASIPVRGYVSCVLGCPYEGNISAAKVAEVSKKMYSMGCYEISLGDRIGIGTPGSMKEMLAAVMKEVPVGALAVHCHDTYGQALANILVALQMGVSVVDASVAGLGGCPYAQGASGNVATEDLVYMLNGLGIHTGVDLQKLMDTGTFICNALNRRTNSKVSQAACRL.

The region spanning 6-273 (VKVVEVGPRD…HTGVDLQKLM (268 aa)) is the Pyruvate carboxyltransferase domain. Arginine 14 is a binding site for substrate. Position 15 (aspartate 15) interacts with a divalent metal cation. At lysine 21 the chain carries N6-acetyllysine. Positions 206 and 208 each coordinate a divalent metal cation. Residue cysteine 239 is part of the active site. Residue asparagine 248 participates in a divalent metal cation binding. A Microbody targeting signal motif is present at residues 296–298 (CRL).

This sequence belongs to the HMG-CoA lyase family. Homodimer; disulfide-linked. Can also form homotetramers.

It localises to the mitochondrion matrix. The protein localises to the peroxisome. The enzyme catalyses (3S)-3-hydroxy-3-methylglutaryl-CoA = acetoacetate + acetyl-CoA. It participates in metabolic intermediate metabolism; (S)-3-hydroxy-3-methylglutaryl-CoA degradation; acetoacetate from (S)-3-hydroxy-3-methylglutaryl-CoA: step 1/1. Mitochondrial 3-hydroxy-3-methylglutaryl-CoA lyase that catalyzes a cation-dependent cleavage of (S)-3-hydroxy-3-methylglutaryl-CoA into acetyl-CoA and acetoacetate, a key step in ketogenesis. Terminal step in leucine catabolism. Ketone bodies (beta-hydroxybutyrate, acetoacetate and acetone) are essential as an alternative source of energy to glucose, as lipid precursors and as regulators of metabolism. The protein is Hydroxymethylglutaryl-CoA lyase, mitochondrial (HMGCL) of Gallus gallus (Chicken).